A 230-amino-acid chain; its full sequence is MLLHIPTILSRTHATSMQERLAAANWTDGRETVGPQGAQVKHNLQLPETSPLRQELGQEILDALARSPLYFAATLPLRTLPPRFNRYQENHQYGFHVDGAVMSLPVAPDHTPASLRSDISCTLFLNDPDEYEGGELIIADTYGEHEVKLPAGDLIIYPSTSLHRVAPVTRGMRIASFFWVQSLVRQATHRHQLLELDTAIQSLTASNTDHNTILRLTNVYHNLLREWSET.

The Fe2OG dioxygenase domain occupies 78 to 182 (RTLPPRFNRY…RIASFFWVQS (105 aa)). Fe cation is bound by residues His-96, Asp-98, and His-163. Arg-173 is a binding site for 2-oxoglutarate.

Fe(2+) serves as cofactor. Requires L-ascorbate as cofactor.

The polypeptide is PKHD-type hydroxylase PD_1553 (Xylella fastidiosa (strain Temecula1 / ATCC 700964)).